We begin with the raw amino-acid sequence, 144 residues long: Galectin a (144 aa).

The region spanning 1-138 (DHIDLEFDVG…DAVLRKLCVV (138 aa)) is the Galectin domain.

In terms of assembly, tetramer.

Its function is as follows. Lectin that binds beta-galactoside and a wide array of complex carbohydrates. In Aplysina lactuca (Marine sponge), this protein is Galectin a.